A 78-amino-acid polypeptide reads, in one-letter code: Large ribosomal subunit protein uL29 (78 aa).

Belongs to the universal ribosomal protein uL29 family.

This chain is Large ribosomal subunit protein uL29, found in Salinispora arenicola (strain CNS-205).